The primary structure comprises 255 residues: Glucanase inhibitor protein 4 (255 aa).

Positions 1 to 21 (MKSITTASFALILFGVGAASA) are cleaved as a signal peptide. In terms of domain architecture, Peptidase S1 spans 29-255 (VLGGGAVPSG…ESLGMDQLGH (227 aa)). A disulfide bond links cysteine 56 and cysteine 72. 4 N-linked (GlcNAc...) asparagine glycosylation sites follow: asparagine 90, asparagine 105, asparagine 110, and asparagine 160. Disulfide bonds link cysteine 180–cysteine 192 and cysteine 202–cysteine 235.

The protein belongs to the peptidase S1 family. Forms an apoplastic complex with host endoglucanases in tomato leaves during P.infestans infection.

The protein resides in the secreted. In terms of biological role, secreted effector that suppresses host plant glucan elicitor-mediated defense responses. Targets host endoglucanases and inhibits the endoglucanase-mediated release of elicitor-active glucan oligosaccharides from P.infestans cell walls. The polypeptide is Glucanase inhibitor protein 4 (Phytophthora infestans (Potato late blight agent)).